The chain runs to 70 residues: Small ribosomal subunit protein bS21B (70 aa).

Belongs to the bacterial ribosomal protein bS21 family.

This Burkholderia thailandensis (strain ATCC 700388 / DSM 13276 / CCUG 48851 / CIP 106301 / E264) protein is Small ribosomal subunit protein bS21B.